We begin with the raw amino-acid sequence, 233 residues long: Ribosomal RNA small subunit methyltransferase G (233 aa).

Residues Gly96, Leu101, 146–147 (LE), and Arg160 contribute to the S-adenosyl-L-methionine site.

This sequence belongs to the methyltransferase superfamily. RNA methyltransferase RsmG family.

It is found in the cytoplasm. It catalyses the reaction guanosine(527) in 16S rRNA + S-adenosyl-L-methionine = N(7)-methylguanosine(527) in 16S rRNA + S-adenosyl-L-homocysteine. In terms of biological role, specifically methylates the N7 position of guanine in position 527 of 16S rRNA. The sequence is that of Ribosomal RNA small subunit methyltransferase G from Sphingopyxis alaskensis (strain DSM 13593 / LMG 18877 / RB2256) (Sphingomonas alaskensis).